Reading from the N-terminus, the 1032-residue chain is Kinesin heavy chain isoform 5A (1032 aa).

Position 2 is an N-acetylalanine (A2). Residues 9–327 form the Kinesin motor domain; sequence SIKVLCRFRP…LMFGQRAKTI (319 aa). ATP is bound at residue 86–93; it reads GQTSSGKT. The microtubule-binding stretch occupies residues 174 to 315; it reads VSSPEEILDV…PSSYNDAETK (142 aa). The necessary for interaction with ZFYVE27 stretch occupies residues 271-361; it reads EGTKSYVPYR…KTKAQKETIA (91 aa). A coiled-coil region spans residues 331–906; the sequence is ASVNLELTAE…VDRIKEAVRY (576 aa). The tract at residues 353-1032 is interaction with BICD2; sequence TKAQKETIAK…FPLHQETAAS (680 aa). T397 is subject to Phosphothreonine. Disordered regions lie at residues 906 to 939 and 978 to 1010; these read YKSSGKRGHSAQIAKPVRPGHYPASSPTNPYGTR and SGATSSGGPLASYQKANMDNGNATDINDNRSDL. The globular stretch occupies residues 907–1032; that stretch reads KSSGKRGHSA…FPLHQETAAS (126 aa). The segment covering 978 to 989 has biased composition (low complexity); it reads SGATSSGGPLAS. Residues 991–1003 show a composition bias toward polar residues; it reads QKANMDNGNATDI.

This sequence belongs to the TRAFAC class myosin-kinesin ATPase superfamily. Kinesin family. Kinesin subfamily. As to quaternary structure, oligomer composed of two heavy chains and two light chains. Interacts with GRIP1. Interacts with FMR1 (via C-terminus); this interaction is increased in a mGluR-dependent manner. Interacts with ZFYVE27. Interacts with VAPA, VAPB, SURF4, RAB11A (GDP-bound form), RAB11B (GDP-bound form) and RTN3 in a ZFYVE27-dependent manner. Interacts with BORCS5. Interacts with BICD2. Interacts with DTNB. Distributed throughout the CNS but is highly enriched in subsets of neurons.

Its subcellular location is the cytoplasm. The protein resides in the perinuclear region. The protein localises to the cytoskeleton. It is found in the perikaryon. The enzyme catalyses ATP + H2O + a kinesin associated with a microtubule at position (n) = ADP + phosphate a kinesin associated with a microtubule at position (n+1, toward the plus end).. Functionally, microtubule-dependent motor required for slow axonal transport of neurofilament proteins (NFH, NFM and NFL). Can induce formation of neurite-like membrane protrusions in non-neuronal cells in a ZFYVE27-dependent manner. The ZFYVE27-KIF5A complex contributes to the vesicular transport of VAPA, VAPB, SURF4, RAB11A, RAB11B and RTN3 proteins in neurons. Required for anterograde axonal transportation of MAPK8IP3/JIP3 which is essential for MAPK8IP3/JIP3 function in axon elongation. The sequence is that of Kinesin heavy chain isoform 5A from Homo sapiens (Human).